Here is a 565-residue protein sequence, read N- to C-terminus: Alkaline nuclease (565 aa).

This sequence belongs to the herpesviridae alkaline nuclease family. In terms of assembly, interacts with major DNA-binding protein; this interaction increases the nuclease processivity of the alkaline exonuclease.

It is found in the host nucleus. It localises to the host cytoplasm. Its function is as follows. Plays a role in processing non linear or branched viral DNA intermediates in order to promote the production of mature packaged unit-length linear progeny viral DNA molecules. Exhibits endonuclease and exonuclease activities and accepts both double-stranded and single-stranded DNA as substrate. Exonuclease digestion of DNA is in the 5'-&gt; 3' direction and the products are 5'-monophosphate nucleosides. Additionally, forms a recombinase with the major DNA-binding protein, which displays strand exchange activity. In Equine herpesvirus 1 (strain V592) (EHV-1), this protein is Alkaline nuclease.